The primary structure comprises 564 residues: Large neutral amino acids transporter small subunit 3 (564 aa).

A helical transmembrane segment spans residues 20 to 40 (VVENLFFSAVLLGWASLLIML). N-linked (GlcNAc...) asparagine glycosylation is found at Asn54 and Asn57. The next 5 membrane-spanning stretches (helical) occupy residues 78–98 (LGFTIGSFLLSATTLPLGILM), 105–124 (PLRLVGSACFAASCTLMALA), 131–151 (LSPLIFLALSLNGFAGICLTF), 165–185 (STFMALMIGSYASSAITFPGI), and 191–211 (AGVPFTVIMFTWSGLACLIFL). Phosphoserine occurs at positions 262 and 267. 2 helical membrane passes run 303–323 (IFLWSLVTMGMTQLRVIFYMG) and 357–377 (SIFGVMQLLCLLTCPLIGYIM). Asn396 is a glycosylation site (N-linked (GlcNAc...) asparagine). At Ser398 the chain carries Phosphoserine. The next 4 membrane-spanning stretches (helical) occupy residues 424-444 (AINAFTLTNILLVGFGIACLI), 451-471 (LLAFVLHTIVRGFFHSACGGL), 490-510 (LISAVFALLQQLLFMAMVGPL), and 515-535 (FWVNLGLLLLSFLGFLLPSYL). N-linked (GlcNAc...) asparagine glycosylation occurs at Asn558.

Belongs to the SLC43A transporter (TC 2.A.1.44) family. In terms of tissue distribution, expressed in the kidney cortex as well as liver, pancreas, and skeletal muscle. In kidney expressed in the glomerular tuft (at protein level). Expressed in liver, skeletal muscle and pancreas (at protein level).

It localises to the cell membrane. It is found in the apical cell membrane. The protein resides in the endoplasmic reticulum membrane. The catalysed reaction is D-leucine(in) = D-leucine(out). It catalyses the reaction L-leucine(in) = L-leucine(out). The enzyme catalyses L-isoleucine(in) = L-isoleucine(out). It carries out the reaction L-methionine(in) = L-methionine(out). The catalysed reaction is L-phenylalanine(in) = L-phenylalanine(out). It catalyses the reaction L-valine(in) = L-valine(out). In terms of biological role, uniport that mediates the transport of neutral amino acids such as L-leucine, L-isoleucine, L-valine, and L-phenylalanine. The transport activity is sodium ions-independent, electroneutral and mediated by a facilitated diffusion. In Mus musculus (Mouse), this protein is Large neutral amino acids transporter small subunit 3.